We begin with the raw amino-acid sequence, 996 residues long: Poly [ADP-ribose] polymerase (996 aa).

Residues 1–369 (MEIDLPFKVE…TSTILKNISL (369 aa)) mediate DNA binding. 2 PARP-type zinc fingers span residues 7 to 89 (FKVE…DNCT) and 114 to 203 (FGIE…PVIK). Residues Cys-19, Cys-22, His-51, Cys-54, Cys-126, Cys-129, His-161, and Cys-164 each coordinate Zn(2+). Short sequence motifs (nuclear localization signal) lie at residues 211–214 (KKAK) and 232–235 (KIKK). The PADR1 zinc-binding domain occupies 220-358 (EEDAASIKEL…EVRAIRYIPP (139 aa)). Residues 286–329 (GALLPCTDCKGRQLLFHKSGYLCNGDLTEWTKCTKLLKEPERKS) form a zinc ribbon region. Cys-291, Cys-294, Cys-308, and Cys-318 together coordinate Zn(2+). The interval 370-507 (KKGDELDGPK…SIYTKSVPKS (138 aa)) is automodification domain. In terms of domain architecture, BRCT spans 382–473 (RERPPLYNIE…AGAINYISSM (92 aa)). Residues 527–625 (VAHVYVSRNK…ENFVKVAGRM (99 aa)) form the WGR domain. Residues 647–764 (KSKLPLSVQD…EIECAYSLLQ (118 aa)) form the PARP alpha-helical domain. In terms of domain architecture, PARP catalytic spans 773–996 (NPIDKHYEQL…YMLRMNFKYK (224 aa)).

This sequence belongs to the ARTD/PARP family.

It localises to the nucleus. The catalysed reaction is NAD(+) + (ADP-D-ribosyl)n-acceptor = nicotinamide + (ADP-D-ribosyl)n+1-acceptor + H(+).. The enzyme catalyses L-aspartyl-[protein] + NAD(+) = 4-O-(ADP-D-ribosyl)-L-aspartyl-[protein] + nicotinamide. It catalyses the reaction L-glutamyl-[protein] + NAD(+) = 5-O-(ADP-D-ribosyl)-L-glutamyl-[protein] + nicotinamide. In terms of biological role, poly-ADP-ribosyltransferase that mediates poly-ADP-ribosylation of proteins and plays a key role in DNA repair. Mainly mediates glutamate and aspartate ADP-ribosylation of target proteins: the ADP-D-ribosyl group of NAD(+) is transferred to the acceptor carboxyl group of glutamate and aspartate residues and further ADP-ribosyl groups are transferred to the 2'-position of the terminal adenosine moiety, building up a polymer with an average chain length of 20-30 units. In Sarcophaga peregrina (Flesh fly), this protein is Poly [ADP-ribose] polymerase.